Reading from the N-terminus, the 188-residue chain is Holliday junction branch migration complex subunit RuvA (188 aa).

The domain I stretch occupies residues 1–64 (MIAGISGRVL…QDGITLYGFS (64 aa)). The tract at residues 65–143 (NERKKELFLS…SAGIKDMRIY (79 aa)) is domain II. A region of interest (flexible linker) is located at residue Tyr143. The domain III stretch occupies residues 143–188 (YHESLEALISLGYPEKQAREAVKHVYREGMKTSELIKEALKFLSQR).

It belongs to the RuvA family. In terms of assembly, homotetramer. Forms an RuvA(8)-RuvB(12)-Holliday junction (HJ) complex. HJ DNA is sandwiched between 2 RuvA tetramers; dsDNA enters through RuvA and exits via RuvB. An RuvB hexamer assembles on each DNA strand where it exits the tetramer. Each RuvB hexamer is contacted by two RuvA subunits (via domain III) on 2 adjacent RuvB subunits; this complex drives branch migration. In the full resolvosome a probable DNA-RuvA(4)-RuvB(12)-RuvC(2) complex forms which resolves the HJ.

The protein resides in the cytoplasm. Functionally, the RuvA-RuvB-RuvC complex processes Holliday junction (HJ) DNA during genetic recombination and DNA repair, while the RuvA-RuvB complex plays an important role in the rescue of blocked DNA replication forks via replication fork reversal (RFR). RuvA specifically binds to HJ cruciform DNA, conferring on it an open structure. The RuvB hexamer acts as an ATP-dependent pump, pulling dsDNA into and through the RuvAB complex. HJ branch migration allows RuvC to scan DNA until it finds its consensus sequence, where it cleaves and resolves the cruciform DNA. The sequence is that of Holliday junction branch migration complex subunit RuvA from Thermotoga petrophila (strain ATCC BAA-488 / DSM 13995 / JCM 10881 / RKU-1).